The following is a 312-amino-acid chain: DNA-directed RNA polymerase subunit alpha (312 aa).

Residues 1 to 229 (MLQYQIDRIE…ELFQPLATVT (229 aa)) are alpha N-terminal domain (alpha-NTD). The interval 246 to 312 (IPLEELNLSV…ISIPQSRTSA (67 aa)) is alpha C-terminal domain (alpha-CTD).

The protein belongs to the RNA polymerase alpha chain family. In terms of assembly, in cyanobacteria the RNAP catalytic core is composed of 2 alpha, 1 beta, 1 beta', 1 gamma and 1 omega subunit. When a sigma factor is associated with the core the holoenzyme is formed, which can initiate transcription.

It carries out the reaction RNA(n) + a ribonucleoside 5'-triphosphate = RNA(n+1) + diphosphate. In terms of biological role, DNA-dependent RNA polymerase catalyzes the transcription of DNA into RNA using the four ribonucleoside triphosphates as substrates. The sequence is that of DNA-directed RNA polymerase subunit alpha from Parasynechococcus marenigrum (strain WH8102).